The following is a 910-amino-acid chain: Harmonin (910 aa).

Positions 1–86 are N-terminal domain; it reads MDRKVAREFR…LTPRRSRKLK (86 aa). PDZ domains follow at residues 87-171 and 211-295; these read EVRL…GLIP and KVFI…AGRE. The segment at 194–833 is mediates interaction with MYO7B; that stretch reads GVRGGLGSPG…KAWNQGGDWI (640 aa). Ser219 carries the post-translational modification Phosphoserine. Coiled coils occupy residues 299-377 and 417-482; these read TDRE…WEED and TIRK…DLEE. A disordered region spans residues 563–688; the sequence is VMPHPPSVNS…PPRGPGVSTI (126 aa). Residues 564–582 are compositionally biased toward pro residues; the sequence is MPHPPSVNSPSKVPAPPVL. A compositionally biased stretch (low complexity) spans 583–596; the sequence is PSSGHVSSSSSPWV. Over residues 599–611 the composition is skewed to pro residues; it reads TPPPIPIPPPPSI. A compositionally biased stretch (polar residues) spans 650 to 664; that stretch reads NTHSGKPSSSPTTER. Residues 752-839 enclose the PDZ 3 domain; the sequence is DVRLLRIKKE…GDWIDLVVAV (88 aa). The tract at residues 890–910 is disordered; it reads KSRERNQTDPSWRPASSAPSP. Low complexity predominate over residues 899 to 910; sequence PSWRPASSAPSP.

As to quaternary structure, part of the IMAC/intermicrovillar adhesion complex/intermicrovillar tip-link complex composed of ANKS4B, MYO7B, USH1C, CDHR2 and CDHR5. Part of a complex composed of USH1C, USH1G and MYO7A. Interacts with F-actin. Interacts with USH2A. Interacts with SLC4A7. Interacts (via PDZ1 domain) with the C-terminus of USHBP1. Interacts (via N-terminus and PDZ 2 domain) with CDH23. Interacts with USH1G. Interacts with MYO7B. Interacts with CDHR2 and CDHR5; may mediate their interaction with MYO7B at the microvilli tip. Interacts (via PDZ 1 domain) with ANKS4B. Interacts (via PDZ 1 domain) with DOCK4. In terms of tissue distribution, detected in stereocilia of cochlear hair cells (at protein level). Isoform 1 is expressed in the eye, cochlea, vestibule, heart, kidney, small intestine and testis; it is barely visible in skeletal muscle, liver, and lung and is absent from the brain. Isoforms 2 and 3 are expressed in the cochlea and vestibule.

The protein resides in the cytoplasm. The protein localises to the cytosol. Its subcellular location is the cytoskeleton. It localises to the cell projection. It is found in the microvillus. In terms of biological role, anchoring/scaffolding protein that is a part of the functional network formed by USH1C, USH1G, CDH23 and MYO7A that mediates mechanotransduction in cochlear hair cells. Required for normal development and maintenance of cochlear hair cell bundles. As part of the intermicrovillar adhesion complex/IMAC plays a role in brush border differentiation, controlling microvilli organization and length. Probably plays a central regulatory role in the assembly of the complex, recruiting CDHR2, CDHR5 and MYO7B to the microvilli tips. The sequence is that of Harmonin (Ush1c) from Mus musculus (Mouse).